We begin with the raw amino-acid sequence, 65 residues long: Prokaryotic ubiquitin-like protein Pup (65 aa).

The segment covering 1 to 13 (MAQEQKQPRKSSE) has biased composition (basic and acidic residues). The disordered stretch occupies residues 1 to 34 (MAQEQKQPRKSSEADEAVEAVAETDVSERKEALD). The interval 21–59 (VAETDVSERKEALDSDVDDILDEIDDVLETNAEDFVKSF) is ARC ATPase binding. Residues 25 to 49 (DVSERKEALDSDVDDILDEIDDVLE) are a coiled coil. Residue Glu65 forms an Isoglutamyl lysine isopeptide (Glu-Lys) (interchain with K-? in acceptor proteins) linkage.

It belongs to the prokaryotic ubiquitin-like protein family. Strongly interacts with the proteasome-associated ATPase ARC through a hydrophobic interface; the interacting region of Pup lies in its C-terminal half. There is one Pup binding site per ARC hexamer ring.

It participates in protein degradation; proteasomal Pup-dependent pathway. In terms of biological role, protein modifier that is covalently attached to lysine residues of substrate proteins, thereby targeting them for proteasomal degradation. The tagging system is termed pupylation. This is Prokaryotic ubiquitin-like protein Pup from Nocardioides sp. (strain ATCC BAA-499 / JS614).